Consider the following 506-residue polypeptide: Cytochrome P450 71B8 (506 aa).

A helical transmembrane segment spans residues 5 to 25 (ILLCFFFLFPLLLTLFKKLLP). Cys443 contributes to the heme binding site.

The protein belongs to the cytochrome P450 family. Heme serves as cofactor.

It localises to the membrane. This is Cytochrome P450 71B8 (CYP71B8) from Arabidopsis thaliana (Mouse-ear cress).